Reading from the N-terminus, the 120-residue chain is Large ribosomal subunit protein uL24 (120 aa).

The interval 1-26 (MSKQPDKQRKSQRRAPLHERHKQVRA) is disordered. Basic residues predominate over residues 10–24 (KSQRRAPLHERHKQV).

The protein belongs to the universal ribosomal protein uL24 family. In terms of assembly, part of the 50S ribosomal subunit. Interacts weakly with protein L4.

Functionally, one of two assembly initiator proteins, it binds directly to the 5'-end of the 23S rRNA, where it nucleates assembly of the 50S subunit. Stabilizes the tertiary rRNA structure within the 23S rRNA domain (domain I) to which it binds. Located at the polypeptide exit tunnel on the outside of the subunit. The protein is Large ribosomal subunit protein uL24 (rpl24) of Haloarcula marismortui (strain ATCC 43049 / DSM 3752 / JCM 8966 / VKM B-1809) (Halobacterium marismortui).